The sequence spans 262 residues: Glutamate racemase (262 aa).

Substrate-binding positions include 9-10 and 41-42; these read DS and YG. Cys73 functions as the Proton donor/acceptor in the catalytic mechanism. 74–75 is a substrate binding site; it reads NT. Cys180 acts as the Proton donor/acceptor in catalysis. 181–182 is a substrate binding site; it reads TH.

It belongs to the aspartate/glutamate racemases family.

It carries out the reaction L-glutamate = D-glutamate. It functions in the pathway cell wall biogenesis; peptidoglycan biosynthesis. Its function is as follows. Provides the (R)-glutamate required for cell wall biosynthesis. The sequence is that of Glutamate racemase from Aliivibrio fischeri (strain ATCC 700601 / ES114) (Vibrio fischeri).